The sequence spans 60 residues: Venom protein 4.1 (60 aa).

A signal peptide spans 1–26 (MKALCAILLVLFACSVMFEHFSISTA).

This sequence belongs to the non-disulfide-bridged peptide (NDBP) superfamily. In terms of tissue distribution, expressed by the venom gland.

It is found in the secreted. The chain is Venom protein 4.1 from Lychas mucronatus (Chinese swimming scorpion).